The primary structure comprises 131 residues: uncharacterized protein (131 aa).

It localises to the plastid. Its subcellular location is the chloroplast. This is an uncharacterized protein from Chlorella vulgaris (Green alga).